We begin with the raw amino-acid sequence, 173 residues long: Pathogenesis-related protein 1A/1B (173 aa).

The signal sequence occupies residues 1 to 20 (MSTSAVLFLLLAVFAAGASA).

The protein belongs to the thaumatin family.

This Hordeum vulgare (Barley) protein is Pathogenesis-related protein 1A/1B.